The chain runs to 356 residues: Protein HEXIM1 (356 aa).

Composition is skewed to basic and acidic residues over residues 1–11 and 24–47; these read MAEPLLTEHQH and VHEE…DSRW. The disordered stretch occupies residues 1-162; the sequence is MAEPLLTEHQ…RPSKKKRHWK (162 aa). The segment covering 48–58 has biased composition (polar residues); it reads QSRASLQSGSR. A compositionally biased stretch (basic and acidic residues) spans 84 to 93; it reads SLEKGEKGQN. S98 and S103 each carry phosphoserine. Basic residues predominate over residues 145 to 162; sequence LGKKKHRRRPSKKKRHWK. Positions 147–174 are basic region; mediates nuclear localization and interaction with 7SK snRNA and NR3C1; that stretch reads KKKHRRRPSKKKRHWKPYYKLTWEEKKK. The segment at 199–202 is interaction with P-TEFb; it reads PYNT. The autoinhibitory acidic region; in absence of 7SK snRNA interacts with the basic region preventing interaction with P-TEFb and modulating subcellular localization stretch occupies residues 207 to 247; that stretch reads MDDHDQEEPDLKTGLYPKRAAAKSDDTSDEDFVEEAGEEDG. Residues 210-259 form a disordered region; that stretch reads HDQEEPDLKTGLYPKRAAAKSDDTSDEDFVEEAGEEDGGSDGMGGDGSEF. At S230 the chain carries Phosphoserine. Phosphothreonine is present on T233. Residues 233 to 248 are compositionally biased toward acidic residues; the sequence is TSDEDFVEEAGEEDGG. Residues S234, S249, and S257 each carry the phosphoserine modification. Residues 280-346 are a coiled coil; sequence SKQELIKEYL…LTENELHRQQ (67 aa). A mediates interaction with CCNT1 region spans residues 283-311; it reads ELIKEYLELEKCLSRKEDENNRLRLESKR. Residues 307–352 form a required for inhibition of ESR1-dependent transcription region; sequence LESKRLGGVDARVRELELELDRLRAENLQLLTENELHRQQERAPLS.

It belongs to the HEXIM family. Homooligomer and heterooligomer with HEXIM2; probably dimeric. Core component of the 7SK RNP complex, at least composed of 7SK RNA, LARP7, MEPCE, HEXIM1 (or HEXIM2) and P-TEFb (composed of CDK9 and CCNT1/cyclin-T1). Interacts with the N-CoR complex through NCOR1. Interacts with ESR1 and NR3C1. May interact with NF-kappa-B through RELA. Interacts with CCNT2; mediates formation of a tripartite complex with KPNA2. Part of the HDP-RNP complex composed of at least HEXIM1, PRKDC, XRCC5, XRCC6, paraspeckle proteins (SFPQ, NONO, PSPC1, RBM14, and MATR3) and NEAT1 non-coding RNA. Widely expressed with higher expression in heart, skeletal muscle and brain (at protein level).

It is found in the nucleus. Its subcellular location is the cytoplasm. Its function is as follows. Transcriptional regulator which functions as a general RNA polymerase II transcription inhibitor. Core component of the 7SK RNP complex: in cooperation with 7SK snRNA sequesters P-TEFb in a large inactive 7SK snRNP complex preventing RNA polymerase II phosphorylation and subsequent transcriptional elongation. May also regulate NF-kappa-B, ESR1, NR3C1 and CIITA-dependent transcriptional activity. Plays a role in the regulation of DNA virus-mediated innate immune response by assembling into the HDP-RNP complex, a complex that serves as a platform for IRF3 phosphorylation and subsequent innate immune response activation through the cGAS-STING pathway. This Mus musculus (Mouse) protein is Protein HEXIM1 (Hexim1).